A 349-amino-acid chain; its full sequence is Draxin (349 aa).

The N-terminal stretch at 1–25 (MAASSTFFSPSLFLCVLVLIDITLA) is a signal peptide. The span at 40-53 (NHLQNQETWPQQPR) shows a compositional bias: polar residues. 3 disordered regions span residues 40–63 (NHLQNQETWPQQPRSGHHHKHGLA), 119–166 (PHAE…LYKK), and 246–273 (WPSAKKKEKRRSKSSNGGNETSSAEGEP). Positions 54-63 (SGHHHKHGLA) are enriched in basic residues. Positions 119–139 (PHAERENQSPGSERGKKQNRE) are enriched in basic and acidic residues. 2 stretches are compositionally biased toward basic residues: residues 140-155 (QRRHSRRDRLKHHRGK) and 249-258 (AKKKEKRRSK). N-linked (GlcNAc...) asparagine glycosylation is present at N264.

The protein belongs to the draxin family.

The protein resides in the secreted. Functionally, chemorepulsive axon guidance protein required for the development of spinal cord and forebrain commissures. Acts as a chemorepulsive guidance protein for commissural axons during development. Able to inhibit or repel neurite outgrowth from dorsal spinal cord and cortical explants in vitro. Binds directly to the neurites and growth cones. The polypeptide is Draxin (Gallus gallus (Chicken)).